Consider the following 259-residue polypeptide: Polycomb group RING finger protein 1 (259 aa).

At Ala2 the chain carries N-acetylalanine. Ser3 is subject to Phosphoserine. A Glycyl lysine isopeptide (Lys-Gly) (interchain with G-Cter in SUMO2) cross-link involves residue Lys24. Residues Cys47 to Asn86 form an RING-type zinc finger. The tract at residues Asn86–Pro247 is necessary for repressor activity. Lys88 participates in a covalent cross-link: Glycyl lysine isopeptide (Lys-Gly) (interchain with G-Cter in SUMO2). Positions Leu150 to Lys255 are required for the interaction with the KDM2B-SKP1 heterodimeric complex. The tract at residues Glu167–Lys255 is RING-finger and WD40-associated ubiquitin-like domain (RAWUL); sufficient for interaction with BCOR and BCORL1.

As to quaternary structure, interacts with BCORL1, forming heterodimers. The PCGF1-BCORL1 heterodimeric complex interacts with the KDM2B-SKP1 heterodimeric complex to form a homotetrameric polycomb repression complex 1 (PRC1.1). Component of the repressive BCOR complex containing a Polycomb group subcomplex at least composed of RYBP, RING1 and RNF2/RING2. Specifically interacts with BCOR, RING1 and RNF2/RING2. Component of a PRC1-like complex. Interacts with CBX6, CBX7 and CBX8. Interacts with DPPA4, NANOG, POU5F1 and RYBP.

It localises to the nucleus. Functionally, component of the Polycomb group (PcG) multiprotein BCOR complex, a complex required to maintain the transcriptionally repressive state of some genes, such as BCL6 and the cyclin-dependent kinase inhibitor, CDKN1A. Transcriptional repressor that may be targeted to the DNA by BCL6; this transcription repressor activity may be related to PKC signaling pathway. Represses CDKN1A expression by binding to its promoter, and this repression is dependent on the retinoic acid response element (RARE element). Promotes cell cycle progression and enhances cell proliferation as well. May have a positive role in tumor cell growth by down-regulating CDKN1A. Component of a Polycomb group (PcG) multiprotein PRC1-like complex, a complex class required to maintain the transcriptionally repressive state of many genes, including Hox genes, throughout development. PcG PRC1 complex acts via chromatin remodeling and modification of histones; it mediates monoubiquitination of histone H2A 'Lys-119', rendering chromatin heritably changed in its expressibility. Within the PRC1-like complex, regulates RNF2 ubiquitin ligase activity. Regulates the expression of DPPA4 and NANOG in the NT2 embryonic carcinoma cells. This chain is Polycomb group RING finger protein 1 (PCGF1), found in Bos taurus (Bovine).